Here is a 1469-residue protein sequence, read N- to C-terminus: Accumulation-associated protein (1469 aa).

The first 52 residues, 1-52, serve as a signal peptide directing secretion; that stretch reads MGKRRQGPINKKVDFLPNKLNKYSIRKFTVGTASILLGSTLIFGSSSHEAKA. Disordered stretches follow at residues 52 to 164, 486 to 511, and 528 to 1443; these read AAEE…SEPV, GIET…TPTT, and EIKP…QANE. Polar residues-rich tracts occupy residues 75–94 and 110–125; these read ENTN…STLQ and KANS…SEAP. The span at 129–144 shows a compositional bias: basic and acidic residues; that stretch reads DLARKEDIPAVSKNEE. Residues 145-164 show a composition bias toward polar residues; the sequence is LQSSQPNTDSKIEPTTSEPV. 7 G5 domains span residues 446 to 528, 574 to 656, 702 to 784, 830 to 912, 958 to 1040, 1086 to 1168, and 1211 to 1296; these read PKAV…GGEE, YGPV…GGEE, YGPV…GGEQ, and VTKY…GPTK. The segment covering 489–500 has biased composition (low complexity); sequence TTTTPTYVNPNT. 2 stretches are compositionally biased toward basic and acidic residues: residues 528–537 and 589–613; these read EIKPGHKDEF and PFDK…KGEP. Over residues 614-629 the composition is skewed to low complexity; it reads GTKTITTPTTKNPLTG. Composition is skewed to basic and acidic residues over residues 631 to 646 and 655 to 665; these read KVGE…KQPV and EEIKPGHKDEF. Over residues 738–757 the composition is skewed to low complexity; the sequence is KGEPGTKTITTPTTKNPLTG. Composition is skewed to basic and acidic residues over residues 759-793 and 845-869; these read KVGE…KDEF and PFDK…KGEP. Residues 870-885 are compositionally biased toward low complexity; it reads GTKTITTPTTKNPLTG. Residues 887-921 show a composition bias toward basic and acidic residues; it reads KVGEGEPTEKVTKQPVDEIVHYGGEEIKPGHKDEF. Positions 994 to 1013 are enriched in low complexity; sequence KGEPGTKTITTPTTKNPLTG. The span at 1015 to 1049 shows a compositional bias: basic and acidic residues; it reads KVGEGEPTEKITKQPVDEIVHYGGEEIKPGHKDEF. Positions 1122–1141 are enriched in low complexity; the sequence is KGEPGTKTITTPTTKNPLTG. 3 stretches are compositionally biased toward basic and acidic residues: residues 1143 to 1162, 1229 to 1253, and 1271 to 1286; these read KVGE…DEIV, PFDK…KGEP, and KVGE…KQPV. Residues 1409–1443 show a composition bias toward polar residues; sequence TPTQSGAPEQPNRSMHSTDNKNQLPDTGENRQANE. Positions 1432-1436 match the LPXTG sorting signal motif; the sequence is LPDTG. Residue T1435 is modified to Pentaglycyl murein peptidoglycan amidated threonine. A propeptide spans 1436-1469 (removed by sortase); sequence GENRQANEGTLVGSLLAIVGSLFIFGRRKKGNEK.

It localises to the secreted. The protein resides in the cell wall. The chain is Accumulation-associated protein from Staphylococcus epidermidis (strain ATCC 12228 / FDA PCI 1200).